Here is a 396-residue protein sequence, read N- to C-terminus: S-adenosylmethionine synthase (396 aa).

Histidine 14 provides a ligand contact to ATP. Residue aspartate 16 participates in Mg(2+) binding. Glutamate 42 serves as a coordination point for K(+). 2 residues coordinate L-methionine: glutamate 55 and glutamine 98. The flexible loop stretch occupies residues 98–108 (QSPDIALGVNE). Residues 174-176 (DGK), 241-242 (RF), aspartate 250, 256-257 (RK), alanine 273, and lysine 277 each bind ATP. Residue aspartate 250 coordinates L-methionine. Lysine 281 contacts L-methionine.

The protein belongs to the AdoMet synthase family. In terms of assembly, homotetramer; dimer of dimers. The cofactor is Mg(2+). Requires K(+) as cofactor.

The protein localises to the cytoplasm. The catalysed reaction is L-methionine + ATP + H2O = S-adenosyl-L-methionine + phosphate + diphosphate. Its pathway is amino-acid biosynthesis; S-adenosyl-L-methionine biosynthesis; S-adenosyl-L-methionine from L-methionine: step 1/1. Functionally, catalyzes the formation of S-adenosylmethionine (AdoMet) from methionine and ATP. The overall synthetic reaction is composed of two sequential steps, AdoMet formation and the subsequent tripolyphosphate hydrolysis which occurs prior to release of AdoMet from the enzyme. This chain is S-adenosylmethionine synthase, found in Fervidobacterium nodosum (strain ATCC 35602 / DSM 5306 / Rt17-B1).